A 620-amino-acid polypeptide reads, in one-letter code: Pentatricopeptide repeat-containing protein At5g66520 (620 aa).

PPR repeat units lie at residues 79-113, 114-148, 149-179, 180-210, 211-245, 246-280, 281-311, 312-346, 347-382, and 383-413; these read DTFL…SAPH, NAYT…GYEN, DVYA…IPEP, DDVS…MAEK, NAIS…DVEP, DNVS…RIRM, DSVL…IKKK, SVQA…GIKP, NVIT…NLKP, and TIEH…MPLK. The interval 418–493 is type E motif; sequence IWGALLKACR…VPGCSTISLE (76 aa). Positions 494 to 524 are type E(+) motif; sequence GTTHEFLAGDRSHPEIEKIQSKWRIMRRKLE. Residues 525–620 form a type DYW motif region; that stretch reads ENGYVPELEE…DGKCSCGDYW (96 aa).

The protein belongs to the PPR family. PCMP-H subfamily.

In Arabidopsis thaliana (Mouse-ear cress), this protein is Pentatricopeptide repeat-containing protein At5g66520 (PCMP-H61).